The chain runs to 64 residues: UPF0434 protein BAB2_0345 (64 aa).

Belongs to the UPF0434 family.

In Brucella abortus (strain 2308), this protein is UPF0434 protein BAB2_0345.